The sequence spans 130 residues: Mitochondrial import protein 1 (130 aa).

Positions 1-41 (MSAEEISNPLAESGVTISSDSEQYSAPESASPQSPSSSSPA) are disordered. Residues 15 to 24 (VTISSDSEQY) show a composition bias toward polar residues. Over residues 25-41 (SAPESASPQSPSSSSPA) the composition is skewed to low complexity.

Belongs to the MIM1 family.

The protein localises to the mitochondrion outer membrane. Its function is as follows. Required for the assembly of the TOM (translocase of outer membrane) receptor complex, which is responsible for the recognition and translocation of cytosolically synthesized mitochondrial preproteins. The polypeptide is Mitochondrial import protein 1 (Neurospora crassa (strain ATCC 24698 / 74-OR23-1A / CBS 708.71 / DSM 1257 / FGSC 987)).